The primary structure comprises 304 residues: UDP-3-O-acyl-N-acetylglucosamine deacetylase (304 aa).

The Zn(2+) site is built by histidine 78, histidine 237, and aspartate 241. Histidine 264 serves as the catalytic Proton donor.

This sequence belongs to the LpxC family. The cofactor is Zn(2+).

The enzyme catalyses a UDP-3-O-[(3R)-3-hydroxyacyl]-N-acetyl-alpha-D-glucosamine + H2O = a UDP-3-O-[(3R)-3-hydroxyacyl]-alpha-D-glucosamine + acetate. It participates in glycolipid biosynthesis; lipid IV(A) biosynthesis; lipid IV(A) from (3R)-3-hydroxytetradecanoyl-[acyl-carrier-protein] and UDP-N-acetyl-alpha-D-glucosamine: step 2/6. Its function is as follows. Catalyzes the hydrolysis of UDP-3-O-myristoyl-N-acetylglucosamine to form UDP-3-O-myristoylglucosamine and acetate, the committed step in lipid A biosynthesis. The chain is UDP-3-O-acyl-N-acetylglucosamine deacetylase from Polynucleobacter necessarius subsp. necessarius (strain STIR1).